A 144-amino-acid polypeptide reads, in one-letter code: MQLNELKPVAGSRFKRLRKGRGLSSGHGFTSGRGTKGQKAHGKTRLGFEGGQMPLYRQKPKRGFTSMDHKDFALVSLTTLNQFEDGAEVTPEVLVANGVIKNVKSGVKVLATGKLEKKLTVKANKFSASAVKAIEAAGGTTEVI.

Residues 1-55 are disordered; sequence MQLNELKPVAGSRFKRLRKGRGLSSGHGFTSGRGTKGQKAHGKTRLGFEGGQMPL. Gly residues predominate over residues 23 to 35; sequence LSSGHGFTSGRGT.

The protein belongs to the universal ribosomal protein uL15 family. Part of the 50S ribosomal subunit.

In terms of biological role, binds to the 23S rRNA. The polypeptide is Large ribosomal subunit protein uL15 (Limosilactobacillus fermentum (strain NBRC 3956 / LMG 18251) (Lactobacillus fermentum)).